A 372-amino-acid chain; its full sequence is Gustatory and pheromone receptor 39a, isoform B (372 aa).

Residues 1–32 lie on the Cytoplasmic side of the membrane; the sequence is MGTRNRKLLFFLHYQRYLGLTNLDFSKSLHIY. Residues 33-53 traverse the membrane as a helical segment; sequence WLHGTWSSTAIQIVVVGVFMA. Topologically, residues 54–59 are extracellular; that stretch reads ALLGAL. A helical membrane pass occupies residues 60–80; it reads AESLYYMETKSQTGNTFDNAV. Topologically, residues 81–122 are cytoplasmic; the sequence is ILTTSVTQLLANLWLRSQQKSQVNLLQRLSQVVELLQFEPYA. The chain crosses the membrane as a helical span at residues 123 to 143; it reads VPQFRWLYRIWLLVCLIYGAM. Over 144-147 the chain is Extracellular; the sequence is VTHF. A helical transmembrane segment spans residues 148-168; the sequence is GINWLTTMQISRVLTLIGFVY. Residues 169-224 are Cytoplasmic-facing; that stretch reads RCVLANFQFTCYTGMVVILKKLLQVQVKQLEHLVSTTTISMAGVAGCLRTHDEILL. A helical membrane pass occupies residues 225–245; it reads LGQRELIAVYGGVILFLFIYQ. Residues 246–265 are Extracellular-facing; sequence VMQCILIFYISNLEGFHSSN. The helical transmembrane segment at 266–286 threads the bilayer; that stretch reads DLVLIFCWLAPMLFYLILPLV. The Cytoplasmic segment spans residues 287–348; the sequence is VNDIHNQANK…KSTLFKLFTA (62 aa). Residues 349-368 traverse the membrane as a helical segment; sequence IFTYMVILVQFKEMENSTKS. Position 369 (isoleucine 369) is a topological domain, extracellular.

This sequence belongs to the insect chemoreceptor superfamily. Gustatory receptor (GR) family. Gr21a subfamily. In terms of tissue distribution, expressed in the adult labellar chemosensory neurons. In larvae, is expressed in neurons of the terminal external chemosensory organ, as well as in the dorsal and posterior pharyngeal sense organs.

It is found in the cell membrane. Functionally, gustatory receptor which mediates acceptance or avoidance behavior, depending on its substrates. Plays a role in sustaining courtship behavior in males, possibly through the reception of a stimulating arrestant pheromone. In Drosophila melanogaster (Fruit fly), this protein is Gustatory and pheromone receptor 39a, isoform B (Gr39a).